We begin with the raw amino-acid sequence, 337 residues long: tRNA N6-adenosine threonylcarbamoyltransferase (337 aa).

Residues histidine 111 and histidine 115 each coordinate Fe cation. Residues 134–138, aspartate 167, glycine 180, and asparagine 272 each bind substrate; that span reads LVSGG. Aspartate 300 is a binding site for Fe cation.

Belongs to the KAE1 / TsaD family. Fe(2+) serves as cofactor.

It is found in the cytoplasm. It carries out the reaction L-threonylcarbamoyladenylate + adenosine(37) in tRNA = N(6)-L-threonylcarbamoyladenosine(37) in tRNA + AMP + H(+). In terms of biological role, required for the formation of a threonylcarbamoyl group on adenosine at position 37 (t(6)A37) in tRNAs that read codons beginning with adenine. Is involved in the transfer of the threonylcarbamoyl moiety of threonylcarbamoyl-AMP (TC-AMP) to the N6 group of A37, together with TsaE and TsaB. TsaD likely plays a direct catalytic role in this reaction. This is tRNA N6-adenosine threonylcarbamoyltransferase from Yersinia enterocolitica serotype O:8 / biotype 1B (strain NCTC 13174 / 8081).